The following is a 502-amino-acid chain: Probable cytosol aminopeptidase (502 aa).

Mn(2+) contacts are provided by lysine 267 and aspartate 272. Lysine 279 is a catalytic residue. Aspartate 290, aspartate 349, and glutamate 351 together coordinate Mn(2+). Arginine 353 is a catalytic residue.

It belongs to the peptidase M17 family. Requires Mn(2+) as cofactor.

The protein resides in the cytoplasm. It catalyses the reaction Release of an N-terminal amino acid, Xaa-|-Yaa-, in which Xaa is preferably Leu, but may be other amino acids including Pro although not Arg or Lys, and Yaa may be Pro. Amino acid amides and methyl esters are also readily hydrolyzed, but rates on arylamides are exceedingly low.. It carries out the reaction Release of an N-terminal amino acid, preferentially leucine, but not glutamic or aspartic acids.. Functionally, presumably involved in the processing and regular turnover of intracellular proteins. Catalyzes the removal of unsubstituted N-terminal amino acids from various peptides. The protein is Probable cytosol aminopeptidase of Aeromonas salmonicida (strain A449).